Reading from the N-terminus, the 1593-residue chain is MSLFSCLLLWTLWAACSHGAMDECIDEDDRPQRCMPEFVNAAFNATVVATNTCGSPPEEFCVQTGVTGVTKSCHICNAADPRLHHGAVYLTDYNQPVQPTWWQSQTMLAGIQYPNSINLTLHLGKSFDITYVRLKFHTSRPESFAIYKRSSEDGPWTPYQYYSGSCEKTYSKNNRGFIRTGEDEQQALCTDEFSDISPLYGGNVAFSTLEGRPSAYNFDNSPVLQDWVTATDIRVTLNRLNTFGDEVFNDPKVLKSYYYAISDFAVGGRCKCNGHASECVKNEYSKLVCNCKHNTEGADCNVCKPFYNDRPWRRATAENPNECLPCNCNGKSAECYFDPELYRATGHGGHCRNCADNTDGPKCERCLANYYREASGQRCLSCGCNPVGSLSTQCDNTGRCSCKPGVMGDKCDRCQPGYHSLSEAGCRPCSCNPAGSTQECDVQTGRCQCKENVDGFNCDRCKLGYFNLDPQNPQGCTPCFCFQHSTVCESADGYSVHKITSTFDRDDEGWKGKQRDDSSVPVQWSPSSGEISLISEDYFPIYFVAPDKFLHNQLLSYGQNLTLNFRIQRHDARLSAEDVVLEGSGLRVAVPLIAQGNSYPGEETQTFVFRLHDTTDYPWRPTIKHADFQKLLYNLTSIMIRGTYSAQSAGYLDNVSLVTARRGPGTPARWVEKCTCPQGYLGQHCEQCDQGFRRSRPELRRFSTCERCNCNGHSDTCDPETGMCNCQHNTAGLSCERCKDGFYGDSTVGSSSDCKACPCPAGATCAVVPKTNEVVCTNCPTGTTGKRCELCDDGFFGDPLGEKGPVRACRACSCNNNIDPNAVGNCNRESGECLKCIYNTAGVFCDRCKQGFYGDARAANVADKCKPCKCSPYGTVDRQTACSQVTGQCPCLPHVINRDCGACELGFYNLQSGKGCERCNCNPIGSTNGQCDIVSGQCECQPGVTGQHCERCEVNFFGFSSSGCKPCDCDPEGSESAQCKEDGRCHCRPGFVGSRCDMCEENYFYNRSTPGCQQCPNCYSLVRDKVNQQRQKLLDLQNLIDSLDNTETTVSDKAFEDRLKEAEKTIMDLLEEAQASKEVDKGLLDRLNNINKTLNNQWNRLQNIKNTVDNTGAQADRARNRVRDAENLINTAREELDKAKEAISKVDIKIPTTSGDPNNMTLLAEEARKLSEKHKADADQIEKIAKDANDTSTKAYNMLKKALDGENKTSSDIDELNRKYLEAKDLAKNLEKQAAKVHAEAEEAGNKALKIYANLTSLPPINTKTLEDDANKIKKEASDLDKLIDKTEKEYNDLREDLRGKETEVRKLLDKGKTEQQTADQLLARADAAKALAEEAAKKGKSTFQEAQDILNNLRDFDKRVNDNKTAAEDAMRRIPQINATINEANDKTRRAEAALGNAAADAKDAKAKAEEAEKIANDVQKGSAKTKADAEKAFEDTMKLDKDVDKMMDQLTAAEKELEKKKAEADTDMMMASMASDNAKDAEGNARKAKSAVREVLNTINALLGQLGNIDKVDLSKLNQIDNALKDAKDKMAGSELDRKLKELNDIAKSQEDMISDYDRQIQEIRADIANLNDIKNTLPEGCFNTPSLERP.

Residues 1 to 19 form the signal peptide; the sequence is MSLFSCLLLWTLWAACSHG. One can recognise a Laminin N-terminal domain in the interval 30-269; it reads RPQRCMPEFV…AISDFAVGGR (240 aa). Asn44 and Asn118 each carry an N-linked (GlcNAc...) asparagine glycan. 16 disulfides stabilise this stretch: Cys270-Cys279, Cys272-Cys289, Cys291-Cys300, Cys303-Cys323, Cys326-Cys335, Cys328-Cys351, Cys354-Cys363, Cys366-Cys379, Cys382-Cys394, Cys384-Cys400, Cys402-Cys411, Cys414-Cys426, Cys429-Cys440, Cys431-Cys447, Cys449-Cys458, and Cys461-Cys476. 4 consecutive Laminin EGF-like domains span residues 270–325, 326–381, 382–428, and 429–478; these read CKCN…ECLP, CNCN…RCLS, CGCN…GCRP, and CSCN…GCTP. Residues 505–673 enclose the Laminin IV type A domain; it reads RDDEGWKGKQ…PGTPARWVEK (169 aa). N-linked (GlcNAc...) asparagine glycosylation is found at Asn560, Asn634, and Asn654. Cystine bridges form between Cys708–Cys717, Cys710–Cys724, Cys726–Cys735, Cys738–Cys754, Cys757–Cys765, Cys759–Cys776, Cys779–Cys788, Cys791–Cys809, Cys812–Cys826, Cys814–Cys833, Cys836–Cys845, Cys848–Cys865, Cys868–Cys882, Cys870–Cys889, Cys891–Cys900, Cys903–Cys916, Cys919–Cys931, Cys921–Cys938, Cys940–Cys949, Cys952–Cys964, Cys967–Cys979, Cys969–Cys985, Cys987–Cys996, and Cys999–Cys1012. Laminin EGF-like domains are found at residues 708-756, 757-811, 812-867, 868-918, 919-966, and 967-1014; these read CNCN…DCKA, CPCP…ACRA, CSCN…KCKP, CKCS…GCER, CNCN…GCKP, and CDCD…GCQQ. N-linked (GlcNAc...) asparagine glycosylation is found at Asn1006, Asn1091, Asn1159, Asn1189, Asn1207, Asn1254, Asn1364, and Asn1379. The tract at residues 1014-1593 is domain II and I; sequence QCPNCYSLVR…CFNTPSLERP (580 aa). A coiled-coil region spans residues 1021–1580; the sequence is LVRDKVNQQR…ANLNDIKNTL (560 aa).

As to quaternary structure, laminin is a complex glycoprotein, consisting of three different polypeptide chains (alpha, beta, gamma), which are bound to each other by disulfide bonds into a cross-shaped molecule comprising one long and three short arms with globules at each end.

The protein resides in the secreted. It localises to the extracellular space. The protein localises to the extracellular matrix. It is found in the basement membrane. In terms of biological role, binding to cells via a high affinity receptor, laminin is thought to mediate the attachment, migration and organization of cells into tissues during embryonic development by interacting with other extracellular matrix components. The sequence is that of Laminin subunit gamma-1 (lamc1) from Danio rerio (Zebrafish).